Here is a 495-residue protein sequence, read N- to C-terminus: Membrane-bound lytic murein transglycosylase F (495 aa).

The signal sequence occupies residues 1 to 29; sequence MEIRKLSLSTIRSIITSLSVLVLVISASA. The segment at 30–273 is non-LT domain; that stretch reads TLVRSTPPNV…VTKHFFERHI (244 aa). The segment at 274-495 is LT domain; it reads DEVTTGEAMV…TAAQGENLSL (222 aa). Glu-320 is an active-site residue.

In the N-terminal section; belongs to the bacterial solute-binding protein 3 family. It in the C-terminal section; belongs to the transglycosylase Slt family.

The protein localises to the cell outer membrane. It carries out the reaction Exolytic cleavage of the (1-&gt;4)-beta-glycosidic linkage between N-acetylmuramic acid (MurNAc) and N-acetylglucosamine (GlcNAc) residues in peptidoglycan, from either the reducing or the non-reducing ends of the peptidoglycan chains, with concomitant formation of a 1,6-anhydrobond in the MurNAc residue.. Murein-degrading enzyme that degrades murein glycan strands and insoluble, high-molecular weight murein sacculi, with the concomitant formation of a 1,6-anhydromuramoyl product. Lytic transglycosylases (LTs) play an integral role in the metabolism of the peptidoglycan (PG) sacculus. Their lytic action creates space within the PG sacculus to allow for its expansion as well as for the insertion of various structures such as secretion systems and flagella. This chain is Membrane-bound lytic murein transglycosylase F, found in Cellvibrio japonicus (strain Ueda107) (Pseudomonas fluorescens subsp. cellulosa).